The chain runs to 711 residues: Polyribonucleotide nucleotidyltransferase (711 aa).

Mg(2+)-binding residues include aspartate 486 and aspartate 492. The region spanning 553–612 is the KH domain; it reads PRIHTIKISTDKIKDVIGKGGSVIRALTEETGTTIEIEDDGTVKIAATDGEKAKYAIRRI. One can recognise an S1 motif domain in the interval 622–690; the sequence is GRIYNGKVTR…RQGRVRLSIK (69 aa). The disordered stretch occupies residues 689–711; sequence IKEATEQTQPAAAPEAPTSEQGE. Residues 694–711 are compositionally biased toward low complexity; that stretch reads EQTQPAAAPEAPTSEQGE.

This sequence belongs to the polyribonucleotide nucleotidyltransferase family. Component of the RNA degradosome, which is a multiprotein complex involved in RNA processing and mRNA degradation. Requires Mg(2+) as cofactor.

It is found in the cytoplasm. It carries out the reaction RNA(n+1) + phosphate = RNA(n) + a ribonucleoside 5'-diphosphate. Functionally, involved in mRNA degradation. Catalyzes the phosphorolysis of single-stranded polyribonucleotides processively in the 3'- to 5'-direction. In Salmonella arizonae (strain ATCC BAA-731 / CDC346-86 / RSK2980), this protein is Polyribonucleotide nucleotidyltransferase.